Reading from the N-terminus, the 609-residue chain is UvrABC system protein C (609 aa).

The 79-residue stretch at 16-94 (SSPGVYRMYD…IKQYMPRYNV (79 aa)) folds into the GIY-YIG domain. The UVR domain occupies 203–238 (LQVMTELVSKMEASALALEYEQAASYRDQIAALRRV).

Belongs to the UvrC family. Interacts with UvrB in an incision complex.

The protein resides in the cytoplasm. Its function is as follows. The UvrABC repair system catalyzes the recognition and processing of DNA lesions. UvrC both incises the 5' and 3' sides of the lesion. The N-terminal half is responsible for the 3' incision and the C-terminal half is responsible for the 5' incision. The chain is UvrABC system protein C from Shewanella sediminis (strain HAW-EB3).